Reading from the N-terminus, the 436-residue chain is GTPase Der (436 aa).

EngA-type G domains lie at 4–167 (PVIA…PTDL) and 175–351 (IKFS…ENQN). Residues 10–17 (GRPNVGKS), 57–61 (DTGGI), 119–122 (NKAD), 181–188 (GRPNVGKS), 229–233 (DTAGI), and 294–297 (NKWD) each bind GTP. The KH-like domain maps to 352–436 (RRIQSALLND…PIHLIPRQRK (85 aa)).

Belongs to the TRAFAC class TrmE-Era-EngA-EngB-Septin-like GTPase superfamily. EngA (Der) GTPase family. In terms of assembly, associates with the 50S ribosomal subunit.

GTPase that plays an essential role in the late steps of ribosome biogenesis. The sequence is that of GTPase Der from Latilactobacillus sakei subsp. sakei (strain 23K) (Lactobacillus sakei subsp. sakei).